Consider the following 158-residue polypeptide: Protein FAM177B (158 aa).

Acidic residues predominate over residues 36–48 (EYSTEEEEEEEKE). The disordered stretch occupies residues 36–59 (EYSTEEEEEEEKEEQSTNSTLDPS).

The protein belongs to the FAM177 family.

The polypeptide is Protein FAM177B (FAM177B) (Homo sapiens (Human)).